Consider the following 314-residue polypeptide: MDNRKRLAYAIIQFLHGQLRHGGLSSDAQESLEVAIQCLETAFGVTLEDSDLALPQTLPEIFEAATASKEMPQDPRGPDRTPPSEEDSAEAERLKTEGNEQMKLENFEAAVHLYGKAIELNPANAVYFCNRAAAYSKLGNYVGAVQDCERAIGIDPGYSKAYGRMGLALSSLNKHAEAVAYYKKALELDPDNDTYKSNLKIAELKLREAPSPTGGVGSLDIAGLLNNPHFITMASSLMNSPQLQQLMSGMISGGHNPLGTPGSSPQHSDLASLIQAGQQFAQQMQQQNPEFVEQIRSQVVRSRTPSASHEEQQE.

A disordered region spans residues 65–99 (ATASKEMPQDPRGPDRTPPSEEDSAEAERLKTEGN). Basic and acidic residues predominate over residues 71–83 (MPQDPRGPDRTPP). The residue at position 81 (T81) is a Phosphothreonine. Position 84 is a phosphoserine (S84). Positions 90 to 99 (EAERLKTEGN) are enriched in basic and acidic residues. 3 TPR repeats span residues 91–124 (AERL…NPAN), 125–158 (AVYF…DPGY), and 159–192 (SKAY…DPDN). At K137 the chain carries N6-acetyllysine. Residues 249 to 268 (GMISGGHNPLGTPGSSPQHS) are disordered. Position 302 is a phosphoserine (S302). At T304 the chain carries Phosphothreonine. The residue at position 306 (S306) is a Phosphoserine.

This sequence belongs to the SGT family. Homodimer. Homooligomer. Interacts with DNAJC5 and DNAJC5B. Interacts (via TPR repeats) with HSP90AA1. Interacts (via Gln-rich region) with SLC2A1. Interacts with HSP90AB1. Interacts (via TPR repeats) with HSPA8/Hsc70; the interaction is direct. Interacts with BAG6 (via ubiquitin-like domain); interaction prevents interaction between BAG6 and RNF126. Forms a multiprotein complex, at least composed of DNAJB12, DNAJB14, HSPA8/Hsc70 and SGTA; interaction with DNAJB14 and HSPA8/Hsc70 is direct. As to quaternary structure, (Microbial infection) Interacts with NS1 from parvovirus H-1. In terms of tissue distribution, ubiquitously expressed.

The protein resides in the cytoplasm. It localises to the nucleus. In terms of biological role, co-chaperone that binds misfolded and hydrophobic patches-containing client proteins in the cytosol. Mediates their targeting to the endoplasmic reticulum but also regulates their sorting to the proteasome when targeting fails. Functions in tail-anchored/type II transmembrane proteins membrane insertion constituting with ASNA1 and the BAG6 complex a targeting module. Functions upstream of the BAG6 complex and ASNA1, binding more rapidly the transmembrane domain of newly synthesized proteins. It is also involved in the regulation of the endoplasmic reticulum-associated misfolded protein catabolic process via its interaction with BAG6: collaborates with the BAG6 complex to maintain hydrophobic substrates in non-ubiquitinated states. Competes with RNF126 for interaction with BAG6, preventing the ubiquitination of client proteins associated with the BAG6 complex. Binds directly to HSC70 and HSP70 and regulates their ATPase activity. This chain is Small glutamine-rich tetratricopeptide repeat-containing protein alpha (Sgta), found in Rattus norvegicus (Rat).